We begin with the raw amino-acid sequence, 175 residues long: Adenine phosphoribosyltransferase (175 aa).

This sequence belongs to the purine/pyrimidine phosphoribosyltransferase family. Homodimer.

Its subcellular location is the cytoplasm. It carries out the reaction AMP + diphosphate = 5-phospho-alpha-D-ribose 1-diphosphate + adenine. The protein operates within purine metabolism; AMP biosynthesis via salvage pathway; AMP from adenine: step 1/1. Catalyzes a salvage reaction resulting in the formation of AMP, that is energically less costly than de novo synthesis. This chain is Adenine phosphoribosyltransferase, found in Francisella tularensis subsp. holarctica (strain FTNF002-00 / FTA).